Consider the following 275-residue polypeptide: Myb/SANT-like DNA-binding domain-containing protein 3 (275 aa).

One can recognise a Myb-like domain in the interval 13-78 (FSELEKSILL…QLKKCWENIK (66 aa)). A phosphoserine mark is found at Ser96 and Ser98. A Glycyl lysine isopeptide (Lys-Gly) (interchain with G-Cter in SUMO2) cross-link involves residue Lys154. The stretch at 211–247 (QLIQMNEVHVAKIQQIERECEMAEEEHRIKMEVLNKK) forms a coiled coil. A Phosphoserine modification is found at Ser274.

The protein belongs to the MSANTD3 family.

This chain is Myb/SANT-like DNA-binding domain-containing protein 3 (MSANTD3), found in Bos taurus (Bovine).